The following is a 492-amino-acid chain: Glutamyl-tRNA(Gln) amidotransferase subunit A (492 aa).

Catalysis depends on charge relay system residues Lys-78 and Ser-158. Ser-182 functions as the Acyl-ester intermediate in the catalytic mechanism.

It belongs to the amidase family. GatA subfamily. As to quaternary structure, heterotrimer of A, B and C subunits.

It carries out the reaction L-glutamyl-tRNA(Gln) + L-glutamine + ATP + H2O = L-glutaminyl-tRNA(Gln) + L-glutamate + ADP + phosphate + H(+). Its function is as follows. Allows the formation of correctly charged Gln-tRNA(Gln) through the transamidation of misacylated Glu-tRNA(Gln) in organisms which lack glutaminyl-tRNA synthetase. The reaction takes place in the presence of glutamine and ATP through an activated gamma-phospho-Glu-tRNA(Gln). This is Glutamyl-tRNA(Gln) amidotransferase subunit A from Rhodopseudomonas palustris (strain ATCC BAA-98 / CGA009).